The following is a 645-amino-acid chain: tRNA 5-methylaminomethyl-2-thiouridine biosynthesis bifunctional protein MnmC (645 aa).

A tRNA (mnm(5)s(2)U34)-methyltransferase region spans residues 1–230; it reads MPMSEPIDWL…KRHNLHAVFD (230 aa). An FAD-dependent cmnm(5)s(2)U34 oxidoreductase region spans residues 254 to 645; that stretch reads LGAGIAGAAA…LASERLGRRR (392 aa).

This sequence in the N-terminal section; belongs to the methyltransferase superfamily. tRNA (mnm(5)s(2)U34)-methyltransferase family. It in the C-terminal section; belongs to the DAO family. The cofactor is FAD.

The protein resides in the cytoplasm. It catalyses the reaction 5-aminomethyl-2-thiouridine(34) in tRNA + S-adenosyl-L-methionine = 5-methylaminomethyl-2-thiouridine(34) in tRNA + S-adenosyl-L-homocysteine + H(+). In terms of biological role, catalyzes the last two steps in the biosynthesis of 5-methylaminomethyl-2-thiouridine (mnm(5)s(2)U) at the wobble position (U34) in tRNA. Catalyzes the FAD-dependent demodification of cmnm(5)s(2)U34 to nm(5)s(2)U34, followed by the transfer of a methyl group from S-adenosyl-L-methionine to nm(5)s(2)U34, to form mnm(5)s(2)U34. The polypeptide is tRNA 5-methylaminomethyl-2-thiouridine biosynthesis bifunctional protein MnmC (Delftia acidovorans (strain DSM 14801 / SPH-1)).